The sequence spans 142 residues: Hemoglobin subunit alpha (142 aa).

Position 1 is an N-acetylserine (S1). The 142-residue stretch at 1–142 folds into the Globin domain; sequence SLTDKDKATV…VSLALSERYR (142 aa). H59 is a binding site for O2. A heme b-binding site is contributed by H88.

This sequence belongs to the globin family. In terms of assembly, hb1 is a heterotetramer of two alpha chains and two beta-1 chains. Hb2 is a heterotetramer of two alpha chains and two beta-2 chains. Red blood cells.

Functionally, involved in oxygen transport from gills to the various peripheral tissues. This is Hemoglobin subunit alpha (hba) from Pseudaphritis urvillii (Congolli).